Consider the following 151-residue polypeptide: Putative coiled-coil-helix-coiled-coil-helix domain-containing protein CHCHD2P9, mitochondrial (151 aa).

Residues Met1 to Thr9 constitute a mitochondrion transit peptide. Disordered regions lie at residues Met1 to Pro50 and Thr75 to Gln110. Positions Ser10 to Pro26 are enriched in low complexity. Residues Arg27–Ala38 show a composition bias toward pro residues. 2 stretches are compositionally biased toward low complexity: residues Pro39–Pro50 and Gln100–Gln110. Residues Gln111–Ala151 enclose the CHCH domain. 2 short sequence motifs (cx9C motif) span residues Cys114 to Cys124 and Cys134 to Cys144. 2 disulfides stabilise this stretch: Cys114–Cys144 and Cys124–Cys134.

The protein localises to the mitochondrion. This chain is Putative coiled-coil-helix-coiled-coil-helix domain-containing protein CHCHD2P9, mitochondrial (CHCHD2P9), found in Homo sapiens (Human).